Here is a 1728-residue protein sequence, read N- to C-terminus: Protein NETWORKED 1A (1728 aa).

Residues 13–92 (YSWWWDSHIP…ERYDHATVEL (80 aa)) enclose the NAB domain. Coiled coils occupy residues 155–446 (LGNS…LEIE), 476–827 (MLRD…QVEI), 857–885 (FSEK…EIDN), 954–1016 (QFQS…AELQ), 1090–1323 (EQAE…KETV), 1403–1431 (LLQD…LRRR), and 1576–1684 (RRLA…TKSK). Residues 1419–1441 (AEEKKRRGKLRRRSSSHRSKDRK) are disordered. Basic residues predominate over residues 1424 to 1439 (RRGKLRRRSSSHRSKD).

Belongs to the NET family. In terms of assembly, interacts with F-actin. As to expression, expressed in root meristems and at very low levels throughout mature vasculature.

The protein resides in the cytoplasm. The protein localises to the cytoskeleton. It is found in the cell membrane. It localises to the cell junction. Its subcellular location is the plasmodesma. In terms of biological role, plant-specific actin binding protein. Associates with F-actin at the plasma membrane and plasmodesmata. May be part of a membrane-cytoskeletal adapter complex. The sequence is that of Protein NETWORKED 1A from Arabidopsis thaliana (Mouse-ear cress).